The following is a 215-amino-acid chain: Cytochrome b6 (215 aa).

The chain crosses the membrane as a helical span at residues 32 to 52; it reads IFYCLGGITLTCFLIQFATGF. Cys-35 serves as a coordination point for heme c. Residues His-86 and His-100 each contribute to the heme b site. The next 3 membrane-spanning stretches (helical) occupy residues 90–110, 116–136, and 186–206; these read ASMM…TGGF, LTWV…VTGY, and AHTF…FLMI. Heme b is bound by residues His-187 and His-202.

It belongs to the cytochrome b family. PetB subfamily. As to quaternary structure, the 4 large subunits of the cytochrome b6-f complex are cytochrome b6, subunit IV (17 kDa polypeptide, PetD), cytochrome f and the Rieske protein, while the 4 small subunits are PetG, PetL, PetM and PetN. The complex functions as a dimer. Heme b is required as a cofactor. The cofactor is heme c.

It is found in the cellular thylakoid membrane. Component of the cytochrome b6-f complex, which mediates electron transfer between photosystem II (PSII) and photosystem I (PSI), cyclic electron flow around PSI, and state transitions. The chain is Cytochrome b6 from Desmonostoc sp. (strain PCC 7906) (Nostoc sp. (strain PCC 7906)).